We begin with the raw amino-acid sequence, 80 residues long: Protein FAM229B (80 aa).

Residues 1 to 44 (MPFRFGTQPRRFPVEGGDSSIGLEPGLSSSAACNGKEMSPTRQL) are disordered.

Belongs to the FAM229 family.

In Macaca fascicularis (Crab-eating macaque), this protein is Protein FAM229B (FAM229B).